Reading from the N-terminus, the 59-residue chain is Conotoxin reg3.15 (59 aa).

A signal peptide spans 1 to 15 (RVLLTICLLLFPLTA). A propeptide spanning residues 16–44 (IPLGGDQPAERMRNVRSAVQDPRFDSVGW) is cleaved from the precursor. Cystine bridges form between Cys-45–Cys-59, Cys-46–Cys-55, and Cys-51–Cys-58.

The protein belongs to the conotoxin M superfamily. As to expression, expressed by the venom duct.

It localises to the secreted. This chain is Conotoxin reg3.15, found in Conus regius (Crown cone).